We begin with the raw amino-acid sequence, 430 residues long: MSQITDVYAREILDSRGNPTLEVEVFLESGAMGRAAVPSGASTGEREALELRDGDKGRYLGKGVLKAVANVNDIIAEEVIGMEATDQVGIDRKMLELDGTEFKSKLGANAILGVSLAVAKAAADEVGLSLYQYIGGANAKELPLPMMNIINGGAHADNNVDIQEFMIMPAGAKNFAEALRMGAEIFHALKSVLKGKGYNTAVGDEGGFAPNLKSNEEALEVIIEAIQKAGFKPGEDVLLALDVASSELFSDGVYTLENEAQPKKTADQLIDFYENLVNKYPIISIEDGMAENDWEGWKKMTERLGKRIQIVGDDLFVTNPKILKEGIDKGIANSILIKLNQIGTLTETLDAIEMAKRAGYTTVISHRSGETEDTTLADLSVAVNAGQIKTGSLCRTDRVCKYNQLLRIEDELDAVALFRGKEVFYNLKKK.

A (2R)-2-phosphoglycerate-binding site is contributed by Q163. E205 serves as the catalytic Proton donor. 3 residues coordinate Mg(2+): D242, E286, and D313. Positions 338, 367, 368, and 389 each coordinate (2R)-2-phosphoglycerate. The Proton acceptor role is filled by K338.

This sequence belongs to the enolase family. The cofactor is Mg(2+).

The protein resides in the cytoplasm. The protein localises to the secreted. It localises to the cell surface. It carries out the reaction (2R)-2-phosphoglycerate = phosphoenolpyruvate + H2O. It participates in carbohydrate degradation; glycolysis; pyruvate from D-glyceraldehyde 3-phosphate: step 4/5. Its function is as follows. Catalyzes the reversible conversion of 2-phosphoglycerate (2-PG) into phosphoenolpyruvate (PEP). It is essential for the degradation of carbohydrates via glycolysis. This chain is Enolase, found in Geotalea daltonii (strain DSM 22248 / JCM 15807 / FRC-32) (Geobacter daltonii).